The following is a 203-amino-acid chain: GTP-binding protein YPTC1 (203 aa).

Residues 15–23 (GDSGVGKSC), 33–40 (YTESYIST), 63–67 (DTAGQ), 121–124 (NKSD), and 151–153 (SAK) each bind GTP. The Effector region motif lies at 37–45 (YISTIGVDF). A disordered region spans residues 174–203 (ASQPIPTKAGGPVVRPQEGKPINSKSSSCC). 2 S-geranylgeranyl cysteine lipidation sites follow: cysteine 202 and cysteine 203.

This sequence belongs to the small GTPase superfamily. Rab family.

Its subcellular location is the cell membrane. Its function is as follows. Protein transport. Probably involved in vesicular traffic. In Chlamydomonas reinhardtii (Chlamydomonas smithii), this protein is GTP-binding protein YPTC1 (YPTC1).